We begin with the raw amino-acid sequence, 611 residues long: Zinc metalloproteinase-disintegrin-like MTP9 (611 aa).

Residues 1-20 (MIEVLLVTICFTVFPYQGSS) form the signal peptide. Positions 21-191 (IILESGNVND…DEPIEKISQL (171 aa)) are excised as a propeptide. The region spanning 205–401 (KYIELYVVVD…VRPQCILNKP (197 aa)) is the Peptidase M12B domain. E208 contributes to the Ca(2+) binding site. N-linked (GlcNAc...) asparagine glycosylation is present at N282. D292 is a binding site for Ca(2+). 3 disulfides stabilise this stretch: C316-C396, C356-C380, and C358-C363. Residues H341, H345, and H351 each contribute to the Zn(2+) site. 7 residues coordinate Ca(2+): C396, N399, N414, F416, E418, E421, and D424. Positions 409–493 (PPVCGNYFVE…ECPTDSFQRN (85 aa)) constitute a Disintegrin domain. Disulfide bonds link C412/C441, C423/C436, C425/C431, C435/C456, C447/C453, C452/C478, C465/C485, C472/C504, C497/C509, C516/C566, C531/C573, C541/C575, C544/C554, C561/C599, and C593/C604. The short motif at 471 to 473 (DCD) is the D/ECD-tripeptide element. Positions 473, 474, 476, and 488 each coordinate Ca(2+). 2 N-linked (GlcNAc...) asparagine glycosylation sites follow: N548 and N570.

This sequence belongs to the venom metalloproteinase (M12B) family. P-III subfamily. In terms of assembly, monomer. Zn(2+) serves as cofactor. In terms of tissue distribution, expressed by the venom gland.

It is found in the secreted. Functionally, snake venom zinc metalloproteinase that may impair hemostasis in the prey. The protein is Zinc metalloproteinase-disintegrin-like MTP9 of Drysdalia coronoides (White-lipped snake).